Consider the following 125-residue polypeptide: Small ribosomal subunit protein uS12 (125 aa).

3-methylthioaspartic acid is present on D89. The tract at residues 106–125 (GVKDRKQSRSKYGAKRPKKA) is disordered. Residues 113–125 (SRSKYGAKRPKKA) show a composition bias toward basic residues.

This sequence belongs to the universal ribosomal protein uS12 family. Part of the 30S ribosomal subunit. Contacts proteins S8 and S17. May interact with IF1 in the 30S initiation complex.

In terms of biological role, with S4 and S5 plays an important role in translational accuracy. Its function is as follows. Interacts with and stabilizes bases of the 16S rRNA that are involved in tRNA selection in the A site and with the mRNA backbone. Located at the interface of the 30S and 50S subunits, it traverses the body of the 30S subunit contacting proteins on the other side and probably holding the rRNA structure together. The combined cluster of proteins S8, S12 and S17 appears to hold together the shoulder and platform of the 30S subunit. In Aromatoleum aromaticum (strain DSM 19018 / LMG 30748 / EbN1) (Azoarcus sp. (strain EbN1)), this protein is Small ribosomal subunit protein uS12.